Consider the following 75-residue polypeptide: Small ribosomal subunit protein eS28 (75 aa).

This sequence belongs to the eukaryotic ribosomal protein eS28 family.

This chain is Small ribosomal subunit protein eS28, found in Methanococcus aeolicus (strain ATCC BAA-1280 / DSM 17508 / OCM 812 / Nankai-3).